The sequence spans 104 residues: Replication restart protein PriB (104 aa).

In terms of domain architecture, SSB spans T2–D101. Cysteines 48 and 80 form a disulfide. The short motif at K82–K89 is the L45 loop element.

Belongs to the PriB family. In terms of assembly, homodimer. Primosome assembly occurs via a 'hand-off' mechanism. PriA binds to replication forks, subsequently PriB then DnaT bind; DnaT then displaces ssDNA to generate the helicase loading substrate, which allows DnaC to load helicase DnaB onto the fork. ssDNA is displaced from the PriB-ssDNA complex by DnaT. In a PriA-PriB-replication fork structure, movement of the PriA CRR domain exposes a surface to which PriB binds and contacts ssDNA emerging from the PriA pore. Binds PriA; binding is improved in the presence of ssDNA. Weakly binds DnaT; binding is improved in the presence of ssDNA; as DnaT levels increase PriB dissociates from ssDNA. Component of the replication restart primosome, which is composed of PriA, PriB, PriC, DnaB and DnaT; DnaG primase associates transiently with this complex. Component of the preprimosomal complex composed of one monomer of PriC and DnaT, two monomers of PriA, two dimers of PriB and one hexamer of DnaB. In terms of processing, an intersubunit disulfide bond is seen in some crystals.

Its function is as follows. Involved in the restart of stalled replication forks, which reloads the replicative helicase (DnaB) on sites other than the origin of replication; the PriA-PriB pathway is the major replication restart pathway. There are several restart pathways, the PriA-PriB pathway is subdivided into 2 distinct pathways. priB and priC have redundant roles in the cell. During primosome assembly it facilitates complex formation between PriA and DnaT on DNA; stabilizes PriA on DNA, presumably by preventing or inhibiting PriA DNA translocation activity. Forms a branched DNA-PriA-PriB complex when the lagging strand is single-stranded (ss)DNA. Binds ssDNA in the presence and absence of ssDNA DNA-binding protein (SSB), does not bind branched structures. DNA binding, forming spiral filaments on ssDNA, is cooperative. Stimulates the helicase activity of PriA. The homodimer binds 12 nucleotides of ssDNA. Binds homo-pyrimidine tracts better than homo-purine tracts. Functionally, genetic interactions among priB, dam, lexA, nagC, polA, rdgB, rdgB, rep and uup link the PriA-PriB replication restart pathway to DNA double-strand break repair. The polypeptide is Replication restart protein PriB (Escherichia coli (strain K12)).